A 591-amino-acid chain; its full sequence is V-type ATP synthase alpha chain (591 aa).

242–249 (GPFGAGKT) is a binding site for ATP.

The protein belongs to the ATPase alpha/beta chains family.

It carries out the reaction ATP + H2O + 4 H(+)(in) = ADP + phosphate + 5 H(+)(out). Its function is as follows. Produces ATP from ADP in the presence of a proton gradient across the membrane. The V-type alpha chain is a catalytic subunit. This chain is V-type ATP synthase alpha chain, found in Chlamydia caviae (strain ATCC VR-813 / DSM 19441 / 03DC25 / GPIC) (Chlamydophila caviae).